Consider the following 743-residue polypeptide: MLHFNRCHHLKKITQKCFSSIHVKTDKHAQRFLSRTFALAELRKSWYSTHSLVGDKNIILMGPPGAGKTTVGRIIGQKLGCCVIDVDDDILEKTWNMSVSEKLQDVGNEQFLEEEGKAVLNFSASGSVISLTGSNPMHDASMWHLKKNGIIVYLDVPLLDLICRLKLMKTDRIVGQNSGTSMKDLLKFRRQYYKKWYDARVFCESGASPEEVADKVLNAIKRYQDVDSETFISTRHVWPEDCEQKVSAKFFSEAVIEGLASDGGLFVPAKEFPKLSCGEWKSLVGATYVERAQILLERCIHPADIPAARLGEMIETAYGENFACSKIAPVRHLSGNQFILELFHGPTGSFKDLSLQLMPHIFAHCIPPSCNYMILVATSGDTGSAVLNGFSRLNKNDKQRIAVVAFFPENGVSDFQKAQIIGSQRENGWAVGVESDFDFCQTAIKRIFNDSDFTGFLTVEYGTILSSANSINWGRLLPQVVYHASAYLDLVSQGFISFGSPVDVCIPTGNFGNILAAVYAKMMGIPIRKFICASNQNHVLTDFIKTGHYDLRERKLAQTFSPSIDILKSSNLERHLHLMANKDGQLMTELFNRLESQHHFQIEKALVEKLQQDFVADWCSEGECLAAINSTYNTSGYILDPHTAVAKVVADRVQDKTCPVIISSTAHYSKFAPAIMQALKIKEINETSSSQLYLLGSYNALPPLHEALLERTKQQEKMEYQVCAADMNVLKSHVEQLVQNQFI.

Lys281 is modified (N6-acetyllysine). The residue at position 351 (Lys351) is an N6-(pyridoxal phosphate)lysine.

It belongs to the threonine synthase family. The cofactor is pyridoxal 5'-phosphate.

This Homo sapiens (Human) protein is Threonine synthase-like 1 (THNSL1).